The following is a 1317-amino-acid chain: DNA-directed RNA polymerase subunit beta' (1317 aa).

Residues cysteine 60, cysteine 62, cysteine 75, and cysteine 78 each coordinate Zn(2+). A disordered region spans residues 183 to 209; that stretch reads ELEDEGAKSDVKRKVRDGGEREMRQLR. Mg(2+) is bound by residues aspartate 535, aspartate 537, and aspartate 539. Zn(2+) contacts are provided by cysteine 890, cysteine 967, cysteine 974, and cysteine 977.

This sequence belongs to the RNA polymerase beta' chain family. In terms of assembly, the RNAP catalytic core consists of 2 alpha, 1 beta, 1 beta' and 1 omega subunit. When a sigma factor is associated with the core the holoenzyme is formed, which can initiate transcription. Requires Mg(2+) as cofactor. Zn(2+) serves as cofactor.

The catalysed reaction is RNA(n) + a ribonucleoside 5'-triphosphate = RNA(n+1) + diphosphate. In terms of biological role, DNA-dependent RNA polymerase catalyzes the transcription of DNA into RNA using the four ribonucleoside triphosphates as substrates. The protein is DNA-directed RNA polymerase subunit beta' of Mycolicibacterium vanbaalenii (strain DSM 7251 / JCM 13017 / BCRC 16820 / KCTC 9966 / NRRL B-24157 / PYR-1) (Mycobacterium vanbaalenii).